A 102-amino-acid chain; its full sequence is Putative lipid-transfer protein DIR1 (102 aa).

Residues 1–25 (MASKKAAMVMMAMIVIMAMLVDTSV) form the signal peptide. Intrachain disulfides connect Cys-30/Cys-67, Cys-40/Cys-56, Cys-57/Cys-94, and Cys-69/Cys-102. Gln-34 is an a 1-acyl-sn-glycero-3-phosphocholine binding site. Zn(2+) is bound at residue Glu-36. Asn-38 lines the a 1-acyl-sn-glycero-3-phosphocholine pocket. His-62 contacts Zn(2+).

It belongs to the A9/FIL1 family. Self-interacts and binds to AZI1. Does not interact with PDLP1. Zn(2+) serves as cofactor.

The protein localises to the secreted. It is found in the extracellular space. Its subcellular location is the apoplast. It localises to the endoplasmic reticulum. The protein resides in the cell junction. The protein localises to the plasmodesma. In terms of biological role, putative lipid transfer protein required for systemic acquired resistance (SAR) long distance signaling. May interact with a lipid-derived molecule to promote long distance signaling associated with SAR. Together with AZI1, required for glycerol-3-phosphate- (G3P) and azelaic acid- (AA) induced systemic acquired resistance (SAR). Component of plant systemic immunity involved in priming defenses in a AA-dependent manner, by modulating production and/or translocation of a mobile signal(s) during SAR. Is able to bind with high affinity monoacylated phospholipids, mainly lysophosphatidylcholines. The chain is Putative lipid-transfer protein DIR1 (DIR1) from Arabidopsis thaliana (Mouse-ear cress).